The chain runs to 126 residues: Holo-[acyl-carrier-protein] synthase (126 aa).

Mg(2+)-binding residues include Asp-8 and Glu-50.

The protein belongs to the P-Pant transferase superfamily. AcpS family. Mg(2+) is required as a cofactor.

Its subcellular location is the cytoplasm. The catalysed reaction is apo-[ACP] + CoA = holo-[ACP] + adenosine 3',5'-bisphosphate + H(+). Transfers the 4'-phosphopantetheine moiety from coenzyme A to a Ser of acyl-carrier-protein. In Micrococcus luteus (strain ATCC 4698 / DSM 20030 / JCM 1464 / CCM 169 / CCUG 5858 / IAM 1056 / NBRC 3333 / NCIMB 9278 / NCTC 2665 / VKM Ac-2230) (Micrococcus lysodeikticus), this protein is Holo-[acyl-carrier-protein] synthase.